A 211-amino-acid polypeptide reads, in one-letter code: MSVTALGMMLIAYLCGSVSSAILFCKITGLPDPRLHGSGNPGATNVLRIGGKAAAATVLVFDILKGMLPVWGAYALGVTPLYLGLTAIAACLGHIYPVFFHFRGGKGVATALGAIAPIGLDLTGLMTGTWLLTVLLSGYSSLGAIVSALIAPFYVWWFKPQFTFPVAMLSCLILMRHHDNIQRLWRGQESKIWDKLRKKKQPEDEDTSPEE.

5 consecutive transmembrane segments (helical) span residues Ala-5–Cys-25, Val-58–Val-78, Pro-80–Phe-100, Leu-112–Leu-132, and Gly-138–Phe-158.

The protein belongs to the PlsY family. Probably interacts with PlsX.

It localises to the cell inner membrane. It carries out the reaction an acyl phosphate + sn-glycerol 3-phosphate = a 1-acyl-sn-glycero-3-phosphate + phosphate. It functions in the pathway lipid metabolism; phospholipid metabolism. In terms of biological role, catalyzes the transfer of an acyl group from acyl-phosphate (acyl-PO(4)) to glycerol-3-phosphate (G3P) to form lysophosphatidic acid (LPA). This enzyme utilizes acyl-phosphate as fatty acyl donor, but not acyl-CoA or acyl-ACP. This Pectobacterium atrosepticum (strain SCRI 1043 / ATCC BAA-672) (Erwinia carotovora subsp. atroseptica) protein is Glycerol-3-phosphate acyltransferase.